The chain runs to 70 residues: Small ribosomal subunit protein bS21 (70 aa).

Residues 48–61 (KLAAAVKRQSKRLR) are compositionally biased toward basic residues. A disordered region spans residues 48–70 (KLAAAVKRQSKRLRSQQLPPKMY).

Belongs to the bacterial ribosomal protein bS21 family.

The chain is Small ribosomal subunit protein bS21 from Thiobacillus denitrificans (strain ATCC 25259 / T1).